The sequence spans 77 residues: Small VCP/p97-interacting protein (77 aa).

Disordered regions lie at residues 1–20 (MGLC…DLEE) and 25–77 (LAEA…WTVS). Residue glycine 2 is the site of N-myristoyl glycine attachment. 2 S-palmitoyl cysteine lipidation sites follow: cysteine 4 and cysteine 7. A VCP/p97-interacting motif (VIM) region spans residues 21-33 (KRAKLAEAAERRQ). A compositionally biased stretch (basic and acidic residues) spans 25–37 (LAEAAERRQKEAA). Serine 46 carries the phosphoserine modification.

It belongs to the SVIP family. As to quaternary structure, interacts (via VIM motif) with VCP/p97. Forms a complex with VCP/p97 and DERL1.

Its subcellular location is the membrane. The protein localises to the smooth endoplasmic reticulum membrane. It is found in the golgi apparatus membrane. It localises to the cell membrane. The protein resides in the lysosome membrane. In terms of biological role, negative regulator of the ER-associated degradation pathway (ERAD) of misfolded proteins. It competes with AMFR/gp78 for binding VCP/p97, and inhibits AMFR/gp78-VCP/p97 complex formation that is required for degradation of ERAD substrates. Involved in the regulation of adrenal cortisol and dehydroepiandrosterone (DHEA) biosynthesis. The polypeptide is Small VCP/p97-interacting protein (SVIP) (Homo sapiens (Human)).